The following is a 401-amino-acid chain: Imidazolonepropionase (401 aa).

Fe(3+) is bound by residues H70 and H72. Positions 70 and 72 each coordinate Zn(2+). 3 residues coordinate 4-imidazolone-5-propanoate: R79, Y142, and H175. Y142 serves as a coordination point for N-formimidoyl-L-glutamate. H238 is a binding site for Fe(3+). A Zn(2+)-binding site is contributed by H238. Q241 contacts 4-imidazolone-5-propanoate. D313 contributes to the Fe(3+) binding site. Residue D313 participates in Zn(2+) binding. N315 and G317 together coordinate N-formimidoyl-L-glutamate. Position 318 (T318) interacts with 4-imidazolone-5-propanoate.

It belongs to the metallo-dependent hydrolases superfamily. HutI family. Zn(2+) serves as cofactor. It depends on Fe(3+) as a cofactor.

The protein localises to the cytoplasm. The enzyme catalyses 4-imidazolone-5-propanoate + H2O = N-formimidoyl-L-glutamate. The protein operates within amino-acid degradation; L-histidine degradation into L-glutamate; N-formimidoyl-L-glutamate from L-histidine: step 3/3. Functionally, catalyzes the hydrolytic cleavage of the carbon-nitrogen bond in imidazolone-5-propanoate to yield N-formimidoyl-L-glutamate. It is the third step in the universal histidine degradation pathway. The polypeptide is Imidazolonepropionase (Xanthomonas oryzae pv. oryzae (strain MAFF 311018)).